The following is a 385-amino-acid chain: Lysine 6-dehydrogenase (385 aa).

Belongs to the saccharopine dehydrogenase family. Homohexamer.

The catalysed reaction is L-lysine + NAD(+) = L-1-piperideine-6-carboxylate + NH4(+) + NADH + 2 H(+). Its function is as follows. Catalyzes the oxidative deamination of L-lysine in the presence of NAD. Can also use (S)-(2-aminoethyl)-L-cysteine as a substrate, but more slowly. Can use both NAD and NADP but the preferred substrate is NAD. The polypeptide is Lysine 6-dehydrogenase (lysDH) (Geobacillus stearothermophilus (Bacillus stearothermophilus)).